The following is a 706-amino-acid chain: Polyribonucleotide nucleotidyltransferase (706 aa).

2 residues coordinate Mg(2+): D486 and D492. Residues 553–612 enclose the KH domain; sequence PRIYTMKINPEKIKDVIGKGGSVIRALTDETGTTIEIEDDGTIKIAATDGDKAKHAIRRI. The region spanning 622 to 690 is the S1 motif domain; that stretch reads NRIYAGKVTR…RQGRIRLSMK (69 aa).

It belongs to the polyribonucleotide nucleotidyltransferase family. In terms of assembly, component of the RNA degradosome, which is a multiprotein complex involved in RNA processing and mRNA degradation. It depends on Mg(2+) as a cofactor.

The protein resides in the cytoplasm. The enzyme catalyses RNA(n+1) + phosphate = RNA(n) + a ribonucleoside 5'-diphosphate. In terms of biological role, involved in mRNA degradation. Catalyzes the phosphorolysis of single-stranded polyribonucleotides processively in the 3'- to 5'-direction. This Yersinia enterocolitica serotype O:8 / biotype 1B (strain NCTC 13174 / 8081) protein is Polyribonucleotide nucleotidyltransferase.